A 136-amino-acid polypeptide reads, in one-letter code: Histone H3.2 (136 aa).

A disordered region spans residues 1–42 (MARTKQTARKSTGGKAPRKQLATKAARKSAPSAGGVKKPHRY). At Lys-5 the chain carries N6,N6,N6-trimethyllysine; alternate. Residue Lys-5 is modified to N6,N6-dimethyllysine; alternate. N6-methyllysine; alternate is present on residues Lys-5 and Lys-10. Lys-10 is modified (N6-acetyllysine; alternate). A Phosphoserine modification is found at Ser-11. Lys-15 bears the N6,N6-dimethyllysine; alternate mark. Residues Lys-15, Lys-19, Lys-24, Lys-28, and Lys-37 each carry the N6-acetyllysine; alternate modification. N6-methyllysine; alternate occurs at positions 19, 24, 28, and 37. N6,N6,N6-trimethyllysine; alternate occurs at positions 28 and 37. Lys-28 and Lys-37 each carry N6,N6-dimethyllysine; alternate. Residues Lys-57 and Lys-65 each carry the N6-acetyllysine modification. N6,N6,N6-trimethyllysine; alternate is present on Lys-80. Lys-80 carries the post-translational modification N6,N6-dimethyllysine; alternate. The residue at position 80 (Lys-80) is an N6-methyllysine; alternate.

This sequence belongs to the histone H3 family. In terms of assembly, the nucleosome is a histone octamer containing two molecules each of H2A, H2B, H3 and H4 assembled in one H3-H4 heterotetramer and two H2A-H2B heterodimers. The octamer wraps approximately 147 bp of DNA. Post-translationally, phosphorylated to form H3S10ph. H3S10ph promotes subsequent H3K14ac formation and is required for transcriptional activation through TBP recruitment to the promoters. Mono-, di- and trimethylated by the COMPASS complex to form H3K4me1/2/3. H3K4me activates gene expression by regulating transcription elongation and plays a role in telomere length maintenance. H3K4me enrichment correlates with transcription levels, and occurs in a 5' to 3' gradient with H3K4me3 enrichment at the 5'-end of genes, shifting to H3K4me2 and then H3K4me1. Methylated by SET2 to form H3K36me. H3K36me represses gene expression. Methylated by DOT1 to form H3K79me. H3K79me is required for association of SIR proteins with telomeric regions and for telomeric silencing. The COMPASS-mediated formation of H3K4me2/3 and the DOT1-mediated formation of H3K79me require H2BK123ub1. In terms of processing, acetylation of histone H3 leads to transcriptional activation. H3K14ac formation by GCN5 is promoted by H3S10ph. H3K14ac can also be formed by ESA1. H3K56ac formation occurs predominantly in newly synthesized H3 molecules during G1, S and G2/M of the cell cycle and may be involved in DNA repair.

The protein localises to the nucleus. The protein resides in the chromosome. In terms of biological role, core component of nucleosome. Nucleosomes wrap and compact DNA into chromatin, limiting DNA accessibility to the cellular machineries which require DNA as a template. Histones thereby play a central role in transcription regulation, DNA repair, DNA replication and chromosomal stability. DNA accessibility is regulated via a complex set of post-translational modifications of histones, also called histone code, and nucleosome remodeling. The polypeptide is Histone H3.2 (HHT2) (Mycosarcoma maydis (Corn smut fungus)).